Here is a 138-residue protein sequence, read N- to C-terminus: Host cell factor C1 regulator 1 (138 aa).

The segment at 76–79 is interaction with HCFC1; that stretch reads DHPY. Residues 110-119 carry the Nuclear export signal motif; the sequence is IPEALRLLRL.

In terms of assembly, interacts with HCFC1. In terms of tissue distribution, widely expressed.

The protein resides in the cytoplasm. The protein localises to the nucleus. Its function is as follows. Regulates HCFC1 activity by modulating its subcellular localization. Overexpression of HCFC1R1 leads to accumulation of HCFC1 in the cytoplasm. HCFC1R1-mediated export may provide the pool of cytoplasmic HCFC1 required for import of virion-derived VP16 into the nucleus. The polypeptide is Host cell factor C1 regulator 1 (HCFC1R1) (Homo sapiens (Human)).